The primary structure comprises 560 residues: Involucrin (560 aa).

Positions 1–15 are enriched in polar residues; sequence MSQQHTLPVTLSPAL. Disordered stretches follow at residues 1–131, 150–359, and 404–534; these read MSQQ…KLLD, EQLL…LVQQ, and GQLK…QSAL. Over residues 76 to 91 the composition is skewed to low complexity; that stretch reads EQQQQEPQEQELQQQH. 2 stretches are compositionally biased toward basic and acidic residues: residues 92–115 and 159–172; these read WEQHEEYQKAENPEQQLKQEKAQR and QEGHLKHLEQREGQ. A compositionally biased stretch (low complexity) spans 189–211; the sequence is QKGQLELPEQQEGQLELPEQQEG. Composition is skewed to basic and acidic residues over residues 212-231, 252-264, and 274-320; these read QLKHLEQQEGQLKHLEHQEG, QLKHLDQQEKQPE, and KHLE…EHQE. A compositionally biased stretch (low complexity) spans 321 to 334; sequence GQLGLPEQQVQQLK. 5 stretches are compositionally biased toward basic and acidic residues: residues 335-353, 404-420, 454-463, 476-486, and 494-510; these read QLEKEEGQPKHLEEEEGQL, GQLKHLEEQEGQLKHLE, QLKHLEKQEA, KHLEQQEKQLE, and QLKHLEQQEGQLKDLEQ.

It belongs to the involucrin family. Directly or indirectly cross-linked to cornifelin (CNFN). Substrate of transglutaminase. Specific glutamines or lysines are cross-linked to keratins, desmoplakin and to inter involucrin molecules. Keratinocytes of epidermis and other stratified squamous epithelia.

It is found in the cytoplasm. Its function is as follows. Part of the insoluble cornified cell envelope (CE) of stratified squamous epithelia. This Pan paniscus (Pygmy chimpanzee) protein is Involucrin (IVL).